The following is a 403-amino-acid chain: Argininosuccinate synthase (403 aa).

10 to 18 (AYSGGLDTS) provides a ligand contact to ATP. Y87 contacts L-citrulline. G117 lines the ATP pocket. The L-aspartate site is built by T119, N123, and D124. N123 is an L-citrulline binding site. L-citrulline-binding residues include R127, S175, S184, E260, and Y272.

Belongs to the argininosuccinate synthase family. Type 1 subfamily. Homotetramer.

The protein localises to the cytoplasm. It catalyses the reaction L-citrulline + L-aspartate + ATP = 2-(N(omega)-L-arginino)succinate + AMP + diphosphate + H(+). Its pathway is amino-acid biosynthesis; L-arginine biosynthesis; L-arginine from L-ornithine and carbamoyl phosphate: step 2/3. This is Argininosuccinate synthase from Bacillus licheniformis (strain ATCC 14580 / DSM 13 / JCM 2505 / CCUG 7422 / NBRC 12200 / NCIMB 9375 / NCTC 10341 / NRRL NRS-1264 / Gibson 46).